The primary structure comprises 192 residues: Elongation factor P (192 aa).

The interval 133–157 is disordered; it reads EVTETTPGVKGDTAQGGDKPATLES.

Belongs to the elongation factor P family.

The protein localises to the cytoplasm. It functions in the pathway protein biosynthesis; polypeptide chain elongation. Involved in peptide bond synthesis. Stimulates efficient translation and peptide-bond synthesis on native or reconstituted 70S ribosomes in vitro. Probably functions indirectly by altering the affinity of the ribosome for aminoacyl-tRNA, thus increasing their reactivity as acceptors for peptidyl transferase. The protein is Elongation factor P of Salinibacter ruber (strain DSM 13855 / M31).